A 197-amino-acid chain; its full sequence is Probable nicotinate-nucleotide adenylyltransferase (197 aa).

This sequence belongs to the NadD family.

The enzyme catalyses nicotinate beta-D-ribonucleotide + ATP + H(+) = deamido-NAD(+) + diphosphate. It functions in the pathway cofactor biosynthesis; NAD(+) biosynthesis; deamido-NAD(+) from nicotinate D-ribonucleotide: step 1/1. In terms of biological role, catalyzes the reversible adenylation of nicotinate mononucleotide (NaMN) to nicotinic acid adenine dinucleotide (NaAD). This chain is Probable nicotinate-nucleotide adenylyltransferase, found in Borrelia garinii subsp. bavariensis (strain ATCC BAA-2496 / DSM 23469 / PBi) (Borreliella bavariensis).